The chain runs to 165 residues: MISVATAECFTHGKIGIKIHKMACGYREFEKDPNYSIINGNVFVIASMFLPSKKGIESILDVKLPEPDYVFKYSKAYNQENDILVAKMVANALKNKLNCDIAISSTAGVGNGAICILTDKNEYNFTSDIYGDLIKGENILKRQDNGVNKAFNTFVEILKKEYGLK.

Belongs to the UPF0254 family.

The chain is UPF0254 protein MmarC6_1720 from Methanococcus maripaludis (strain C6 / ATCC BAA-1332).